Consider the following 498-residue polypeptide: Myocyte-specific enhancer factor 2D homolog (498 aa).

Positions 1–100 (MGRKKIQIQR…KGFNGCDSPE (100 aa)) are interaction with hdac9. An MADS-box domain is found at 3-57 (RKKIQIQRITDERNRQVTFTKRKFGLMKKAYELSVLCDCEIALIIFNHSNKLFQY). The segment at residues 58–86 (ASTDMDKVLLKYTEYNEPHESRTNADIIE) is a DNA-binding region (mef2-type). Disordered stretches follow at residues 173 to 215 (LTDP…NSNG), 243 to 267 (LGKV…NSRK), and 411 to 498 (SIKR…AWVT). Residues 412–424 (IKREPASPNRERS) show a composition bias toward basic and acidic residues. 2 stretches are compositionally biased toward polar residues: residues 425 to 434 (TGTPLSCFSH) and 447 to 457 (DSLSSNASSFE).

This sequence belongs to the MEF2 family. In terms of assembly, binds DNA as a multimer, probably as a dimer. Interacts with hdac9. As to expression, restricted to the somitic mesoderm of early embryos and to the body muscle (myotomes) of the tadpole. Expressed in all tissues examined in the adult.

It localises to the nucleus. May regulate muscle-specific transcription in the embryo and may regulate transcription of a variety of cell types in the adult. It binds to the sequence 5'-CTA[TA]4TAR-3'. In Xenopus laevis (African clawed frog), this protein is Myocyte-specific enhancer factor 2D homolog (mef2d).